Here is a 774-residue protein sequence, read N- to C-terminus: Pentatricopeptide repeat-containing protein At4g20770 (774 aa).

20 PPR repeats span residues 5–39, 40–70, 71–101, 102–136, 137–171, 172–203, 204–238, 239–270, 283–313, 314–348, 349–379, 380–414, 415–449, 450–480, 482–516, 518–552, 553–583, 584–618, 619–654, and 655–685; these read GNKY…GMKS, DTYL…MSVR, DVYS…MPER, DVVS…GFLP, SRFT…GLDK, NIFV…LSQP, NEVS…GVQV, DSVC…LGKQ, DLHL…MPEV, NVVS…GFQP, NEVT…IPQP, SVSA…NLKP, DKTT…EISK, NSHI…CINE, DIAC…AVLC, NETS…GYVS, DSFV…VLRK, NTVI…GEKP, DGIT…GIEP, and ELDH…TPYK. The interval 690-765 is type E motif; it reads LWEILLSSCR…TPGQSWTTYG (76 aa).

This sequence belongs to the PPR family. PCMP-E subfamily.

This chain is Pentatricopeptide repeat-containing protein At4g20770 (PCMP-E35), found in Arabidopsis thaliana (Mouse-ear cress).